A 977-amino-acid polypeptide reads, in one-letter code: uncharacterized protein (977 aa).

The interval Ala-100–Tyr-152 is disordered. Basic and acidic residues-rich tracts occupy residues Lys-109–Leu-124 and Gln-131–Lys-144. Ser-165 is subject to Phosphoserine. Polar residues-rich tracts occupy residues Pro-166–Pro-175 and Ser-183–His-193. Residues Pro-166 to Thr-194 are disordered.

This is an uncharacterized protein from Schizosaccharomyces pombe (strain 972 / ATCC 24843) (Fission yeast).